Consider the following 106-residue polypeptide: UPF0145 protein AZOSEA16190 (106 aa).

The protein belongs to the UPF0145 family.

This is UPF0145 protein AZOSEA16190 from Aromatoleum aromaticum (strain DSM 19018 / LMG 30748 / EbN1) (Azoarcus sp. (strain EbN1)).